Consider the following 135-residue polypeptide: Mini-ribonuclease 3 (135 aa).

Residue Asp-17 is part of the active site.

The protein belongs to the MrnC RNase family. Homodimer. The cofactor is Mg(2+).

It is found in the cytoplasm. Involved in correct processing of both the 5' and 3' ends of 23S rRNA precursor. Processes 30S rRNA precursor transcript even in absence of ribonuclease 3 (Rnc); Rnc processes 30S rRNA into smaller rRNA precursors. This Bacillus cereus (strain ATCC 14579 / DSM 31 / CCUG 7414 / JCM 2152 / NBRC 15305 / NCIMB 9373 / NCTC 2599 / NRRL B-3711) protein is Mini-ribonuclease 3.